The sequence spans 812 residues: DNA replication licensing factor MCM3 (812 aa).

Alanine 2 carries the N-acetylalanine modification. Phosphoserine is present on serine 160. Position 293 is an N6-acetyllysine (lysine 293). Residues valine 295–leucine 502 form the MCM domain. 5 residues coordinate ADP: glutamine 353, leucine 393, glutamate 394, alanine 395, and alanine 397. The short motif at serine 477 to aspartate 480 is the Arginine finger element. Position 547 is an N6-acetyllysine (lysine 547). Serine 611 carries the phosphoserine modification. Arginine 664 is an ATP binding site. The segment at arginine 664–serine 744 is disordered. Phosphoserine is present on residues serine 668, serine 672, and serine 681. Positions aspartate 670 to serine 681 are enriched in acidic residues. At tyrosine 705 the chain carries Phosphotyrosine. At serine 708 the chain carries Phosphoserine. Threonine 719, threonine 722, and threonine 729 each carry phosphothreonine. Residues proline 720–serine 744 are compositionally biased toward basic and acidic residues. 2 positions are modified to phosphoserine: serine 732 and serine 738.

Belongs to the MCM family. Component of the MCM2-7 complex. The complex forms a toroidal hexameric ring with the proposed subunit order MCM2-MCM6-MCM4-MCM7-MCM3-MCM5. Component of the CMG helicase complex, a hexameric ring of related MCM2-7 subunits stabilized by CDC45 and the tetrameric GINS complex. Associated with the replication-specific DNA polymerase alpha. Interacts with MCMBP. Interacts with ANKRD17. Interacts with MCM3AP; this interaction leads to MCM3 acetylation. In terms of processing, acetylated by MCM3AP. Post-translationally, O-glycosylated (O-GlcNAcylated), in a cell cycle-dependent manner.

The protein localises to the nucleus. It is found in the chromosome. The catalysed reaction is ATP + H2O = ADP + phosphate + H(+). Functionally, acts as a component of the MCM2-7 complex (MCM complex) which is the replicative helicase essential for 'once per cell cycle' DNA replication initiation and elongation in eukaryotic cells. Core component of CDC45-MCM-GINS (CMG) helicase, the molecular machine that unwinds template DNA during replication, and around which the replisome is built. The active ATPase sites in the MCM2-7 ring are formed through the interaction surfaces of two neighboring subunits such that a critical structure of a conserved arginine finger motif is provided in trans relative to the ATP-binding site of the Walker A box of the adjacent subunit. The six ATPase active sites, however, are likely to contribute differentially to the complex helicase activity. Required for the entry in S phase and for cell division. This is DNA replication licensing factor MCM3 (Mcm3) from Mus musculus (Mouse).